Here is a 1067-residue protein sequence, read N- to C-terminus: Protein bric-a-brac 2 (1067 aa).

Positions 30–121 (MAPPEEPKMV…PPRPLTSSEV (92 aa)) are disordered. Composition is skewed to basic and acidic residues over residues 47 to 62 (HLEDQNRKYSPEREVE) and 86 to 98 (KSPEKDVETELVK). At Tyr-55 the chain carries Phosphotyrosine. A phosphoserine mark is found at Ser-56, Ser-87, and Ser-147. A BTB domain is found at 223–288 (VDVTLSCEGH…MYKGEINVCQ (66 aa)). Disordered stretches follow at residues 312–412 (GRGE…QSQP), 444–505 (ANQR…AAQH), and 525–563 (GAAGAGGAGSGSGSGASAPTGGTGVAGSGAGAAVGSHHD). The span at 326 to 335 (FDDEDEEEEL) shows a compositional bias: acidic residues. A Phosphoserine modification is found at Ser-377. Residue Thr-384 is modified to Phosphothreonine. The span at 391–412 (GGESEISERGSSGTPGQSQSQP) shows a compositional bias: low complexity. Composition is skewed to gly residues over residues 525–538 (GAAGAGGAGSGSGS) and 545–556 (GGTGVAGSGAGA). The HTH psq-type domain maps to 635-687 (FRERGPLKSWRPEAMAEAIFSVLKEGLSLSQAARKFDIPYPTFVLYANRVHNM). Residues 645–690 (RPEAMAEAIFSVLKEGLSLSQAARKFDIPYPTFVLYANRVHNMLGP) constitute a DNA-binding region (H-T-H motif). Residues 697 to 708 (DPRPKARGRPQR) constitute a DNA-binding region (a.T hook). Disordered stretches follow at residues 796–829 (QILSQQQQHQQHHQQQAHHQQQPSHHQQQSPHAQ), 860–879 (AKHQQQQGERRGSENLPDLS), and 891–967 (VMPS…PYSA). A compositionally biased stretch (low complexity) spans 812 to 829 (AHHQQQPSHHQQQSPHAQ). The segment covering 904–914 (AAPNSAASYAR) has biased composition (low complexity). Residues 915–933 (ELSRERERDRERERERELS) are compositionally biased toward basic and acidic residues. A compositionally biased stretch (low complexity) spans 934 to 949 (RQYGSQSRGSSSGSGS).

Leg imaginal disk at the central region of the tarsus and in eye antenna disk at the basal cylinder.

Its subcellular location is the nucleus. In terms of biological role, probably acts as a transcriptional regulator. Required for the specification of the tarsal segment. Also involved in antenna development. The polypeptide is Protein bric-a-brac 2 (bab2) (Drosophila melanogaster (Fruit fly)).